Reading from the N-terminus, the 141-residue chain is MRAVVQRVTRARVTVEGEVVGAVDGPGLLVLLGVTHDDGPAQVELIARKVAQLRILRGERAAADVGAPVLLVSQFTLYADTRKGRRPTWNAAAPGDVAQPLVDAVADALRGHGLPVETGRFGADMAVELVNDGPTTILLDA.

Residues 133 to 134 carry the Gly-cisPro motif, important for rejection of L-amino acids motif; it reads GP.

Belongs to the DTD family. In terms of assembly, homodimer.

The protein resides in the cytoplasm. The enzyme catalyses glycyl-tRNA(Ala) + H2O = tRNA(Ala) + glycine + H(+). It carries out the reaction a D-aminoacyl-tRNA + H2O = a tRNA + a D-alpha-amino acid + H(+). Its function is as follows. An aminoacyl-tRNA editing enzyme that deacylates mischarged D-aminoacyl-tRNAs. Also deacylates mischarged glycyl-tRNA(Ala), protecting cells against glycine mischarging by AlaRS. Acts via tRNA-based rather than protein-based catalysis; rejects L-amino acids rather than detecting D-amino acids in the active site. By recycling D-aminoacyl-tRNA to D-amino acids and free tRNA molecules, this enzyme counteracts the toxicity associated with the formation of D-aminoacyl-tRNA entities in vivo and helps enforce protein L-homochirality. The polypeptide is D-aminoacyl-tRNA deacylase (Kineococcus radiotolerans (strain ATCC BAA-149 / DSM 14245 / SRS30216)).